The sequence spans 242 residues: Probable transcriptional regulatory protein Bphy_2064 (242 aa).

It belongs to the TACO1 family.

The protein resides in the cytoplasm. The chain is Probable transcriptional regulatory protein Bphy_2064 from Paraburkholderia phymatum (strain DSM 17167 / CIP 108236 / LMG 21445 / STM815) (Burkholderia phymatum).